Reading from the N-terminus, the 341-residue chain is Hyaluronan and proteoglycan link protein 2 (341 aa).

An N-terminal signal peptide occupies residues 1–27 (MPSRIPLPAFCCFLLPWAFTSFHKALG). An Ig-like V-type domain is found at 35–143 (PHYLLPPIHE…GIEDESVALT (109 aa)). Cystine bridges form between Cys58–Cys129, Cys171–Cys241, Cys195–Cys216, Cys266–Cys337, and Cys291–Cys312. Link domains follow at residues 149-243 (VVFP…FCFT) and 246-339 (LAGQ…YCYA).

The protein belongs to the HAPLN family. Brain. Predominantly expressed by neurons. Colocalizes with versican V2 in developing and adult cerebellar white matter and at the nodes of Ranvier.

The protein localises to the secreted. Its subcellular location is the extracellular space. It is found in the extracellular matrix. In terms of biological role, mediates a firm binding of versican V2 to hyaluronic acid. May play a pivotal role in the formation of the hyaluronan-associated matrix in the central nervous system (CNS) which facilitates neuronal conduction and general structural stabilization. Binds to hyaluronic acid. In Mus musculus (Mouse), this protein is Hyaluronan and proteoglycan link protein 2 (Hapln2).